Here is a 228-residue protein sequence, read N- to C-terminus: Cytidylate kinase (228 aa).

Position 12 to 20 (12 to 20) interacts with ATP; the sequence is GPASAGKST.

It belongs to the cytidylate kinase family. Type 1 subfamily.

It localises to the cytoplasm. The enzyme catalyses CMP + ATP = CDP + ADP. It carries out the reaction dCMP + ATP = dCDP + ADP. This Lactiplantibacillus plantarum (strain ATCC BAA-793 / NCIMB 8826 / WCFS1) (Lactobacillus plantarum) protein is Cytidylate kinase.